The primary structure comprises 392 residues: Bifunctional enzyme Fae/Hps (392 aa).

The interval 1-161 is formaldehyde-activating enzyme; the sequence is MFQIGEALMG…EESNKSTHAI (161 aa). Residue His-17 is the Proton donor of the active site. Substrate contacts are provided by Asp-19, Leu-48, Lys-66, Thr-68, and Gln-83. Residues 162–392 are 3-hexulose-6-phosphate synthase; it reads MGFKVTRLWD…IDQFRVMTDF (231 aa).

The protein in the N-terminal section; belongs to the formaldehyde-activating enzyme family. In the C-terminal section; belongs to the HPS/KGPDC family. HPS subfamily.

The catalysed reaction is 5,6,7,8-tetrahydromethanopterin + formaldehyde = 5,10-methylenetetrahydromethanopterin + H2O. It catalyses the reaction D-ribulose 5-phosphate + formaldehyde = D-arabino-hex-3-ulose 6-phosphate. The protein operates within carbohydrate biosynthesis; D-ribose 5-phosphate biosynthesis. Its function is as follows. Catalyzes the condensation of formaldehyde with tetrahydromethanopterin (H(4)MPT) to 5,10-methylenetetrahydromethanopterin. Functionally, catalyzes the reversible formation of ribulose-5-phosphate and formaldehyde from 3-hexulose-6-phosphate. The polypeptide is Bifunctional enzyme Fae/Hps (Methanosarcina mazei (strain ATCC BAA-159 / DSM 3647 / Goe1 / Go1 / JCM 11833 / OCM 88) (Methanosarcina frisia)).